Consider the following 172-residue polypeptide: Ubiquitin-conjugating enzyme E2 2 (172 aa).

Residues 4–150 form the UBC core domain; it reads PARRRLMRDF…VKETVEKSWE (147 aa). C88 functions as the Glycyl thioester intermediate in the catalytic mechanism. S120 is subject to Phosphoserine; by SGV1. Positions 145 to 172 are disordered; the sequence is VEKSWEDDMDDMDDDDDDDDDDDDDEAD. Acidic residues predominate over residues 151 to 172; it reads DDMDDMDDDDDDDDDDDDDEAD.

Belongs to the ubiquitin-conjugating enzyme family. As to quaternary structure, forms a heterodimer complexes with the E3 enzymes BRE1, RAD18 and UBR1. Also interacts with UBR2, RTF1, PAF1 and the RNA polymerase II hyperphosphorylated form. The interaction with RNA polymerase II is BRE1- and PAF1-dependent. The N-terminus is blocked.

The protein localises to the cytoplasm. It is found in the nucleus. The enzyme catalyses S-ubiquitinyl-[E1 ubiquitin-activating enzyme]-L-cysteine + [E2 ubiquitin-conjugating enzyme]-L-cysteine = [E1 ubiquitin-activating enzyme]-L-cysteine + S-ubiquitinyl-[E2 ubiquitin-conjugating enzyme]-L-cysteine.. The protein operates within protein modification; protein ubiquitination. In terms of biological role, E2 ubiquitin-conjugating enzyme that accepts ubiquitin from the ubiquitin-activating enzyme E1 and transfers it to a E3 ubiquitin-protein ligase. In association with the E3 enzyme BRE1 and LGE1, it plays a role in transcription regulation by catalyzing the monoubiquitination of histone H2B to form H2BK123ub1. H2BK123ub1 gives a specific tag for epigenetic transcriptional activation, elongation by RNA polymerase II, telomeric silencing, and is also a prerequisite for H3K4me and H3K79me formation. In association with the E3 enzyme RAD18, it catalyzes the monoubiquitination of POL30 'Lys-164', involved in postreplication repair of UV-damaged DNA. The RAD6/UBC2-RAD18 complex is also involved in prevention of spontaneous mutations caused by 7,8-dihydro-8-oxoguanine. In association with the E3 enzyme UBR1, is involved in N-end rule-dependent protein degradation. Also involved in sporulation. This Saccharomyces cerevisiae (strain ATCC 204508 / S288c) (Baker's yeast) protein is Ubiquitin-conjugating enzyme E2 2 (RAD6).